The chain runs to 126 residues: Diadenosine hexaphosphate hydrolase (126 aa).

The 121-residue stretch at 1-121 (MELGAGGVVF…EDLGLLEVAL (121 aa)) folds into the Nudix hydrolase domain. Substrate-binding positions include 21 to 23 (DRM) and 30 to 32 (KGH). A Nudix box motif is present at residues 31-52 (GHPEPGESLEEAAVREVWEETG). 2 residues coordinate Mg(2+): E46 and E50. Residues 66–68 (YVN), R74, and E112 contribute to the substrate site.

Belongs to the Nudix hydrolase family. As to quaternary structure, monomer. The cofactor is Mg(2+).

It carries out the reaction P(1),P(6)-bis(5'-adenosyl) hexaphosphate + H2O = 2 ATP + 2 H(+). It catalyses the reaction P(1),P(5)-bis(5'-adenosyl) pentaphosphate + H2O = ADP + ATP + 2 H(+). The catalysed reaction is P(1),P(4)-bis(5'-adenosyl) tetraphosphate + H2O = AMP + ATP + 2 H(+). Its activity is regulated as follows. Strongly inhibited by fluoride ions. Specifically hydrolyzes (di)adenosine polyphosphates but not ATP or diadenosine triphosphate, generating ATP as the product. Diadenosine hexaphosphate (Ap6A) is the preferred substrate and hydrolysis yields 2 ATP. It is the only enzyme that symmetrically hydrolyzes Ap6A. It also hydrolyzes diadenosine pentaphosphate (Ap5A), diadenosine tetraphosphate (Ap4A) and adenosine tetraphosphate (p4A). This chain is Diadenosine hexaphosphate hydrolase, found in Thermus thermophilus.